Here is a 926-residue protein sequence, read N- to C-terminus: Tyrosine-protein phosphatase non-receptor type 4 (926 aa).

The FERM domain maps to 29-312 (VVCNILLLDN…EHHTFFRLDR (284 aa)). Disordered regions lie at residues 380-412 (DDRLETQSLPSRSPPGTPNHRNSTFTQEGTRLR) and 430-475 (EVFV…KNSW). Composition is skewed to polar residues over residues 398–408 (NHRNSTFTQEG) and 430–456 (EVFVNQRSPSSTQANSIVLESSPSQET). The residue at position 474 (Ser474) is a Phosphoserine. The PDZ domain occupies 517 to 589 (LIRMKPDENG…DQVVLFIKAS (73 aa)). The Tyrosine-protein phosphatase domain maps to 655-911 (VLTQFDQLYR…RFVCEAILKV (257 aa)). Residues Asp820, 852–858 (CSAGIGR), and Gln896 contribute to the substrate site. Cys852 acts as the Phosphocysteine intermediate in catalysis.

Belongs to the protein-tyrosine phosphatase family. Non-receptor class subfamily. Interacts with MAPK12 (via C-terminus); this interaction abolishes PTPN4 catalytic autoinhibition and thus activates the phosphatase activity. In terms of assembly, (Microbial infection) Interacts with attenuated rabies virus protein G; this interaction is required for virally-induced apoptosis. Post-translationally, highly phosphorylated on serine and threonine residues but not on tyrosines. Cleaved and activated by calpain I/CAPN1.

The protein localises to the cell membrane. The protein resides in the cytoplasm. Its subcellular location is the cytoskeleton. It carries out the reaction O-phospho-L-tyrosyl-[protein] + H2O = L-tyrosyl-[protein] + phosphate. Functionally, phosphatase that plays a role in immunity, learning, synaptic plasticity or cell homeostasis. Regulates neuronal cell homeostasis by protecting neurons against apoptosis. Negatively regulates TLR4-induced interferon beta production by dephosphorylating adapter TICAM2 and inhibiting subsequent TRAM-TRIF interaction. Also dephosphorylates the immunoreceptor tyrosine-based activation motifs/ITAMs of the TCR zeta subunit and thereby negatively regulates TCR-mediated signaling pathway. May act at junctions between the membrane and the cytoskeleton. In Homo sapiens (Human), this protein is Tyrosine-protein phosphatase non-receptor type 4 (PTPN4).